Reading from the N-terminus, the 520-residue chain is GMP synthase [glutamine-hydrolyzing] (520 aa).

Residues 9-202 form the Glutamine amidotransferase type-1 domain; the sequence is TILIIDFGSQ…VHRIVGVKPG (194 aa). The Nucleophile role is filled by Cys86. Active-site residues include His176 and Glu178. Residues 203–395 enclose the GMPS ATP-PPase domain; that stretch reads WTMGAYREQA…LGLPDSFIGR (193 aa). ATP is bound at residue 230 to 236; sequence SGGVDSS.

In terms of assembly, homodimer.

The enzyme catalyses XMP + L-glutamine + ATP + H2O = GMP + L-glutamate + AMP + diphosphate + 2 H(+). It participates in purine metabolism; GMP biosynthesis; GMP from XMP (L-Gln route): step 1/1. In terms of biological role, catalyzes the synthesis of GMP from XMP. This Brucella ovis (strain ATCC 25840 / 63/290 / NCTC 10512) protein is GMP synthase [glutamine-hydrolyzing].